The primary structure comprises 93 residues: uncharacterized protein (93 aa).

This is an uncharacterized protein from Schizosaccharomyces pombe (strain 972 / ATCC 24843) (Fission yeast).